Here is a 461-residue protein sequence, read N- to C-terminus: Homocitrate synthase (461 aa).

Residues 4-259 enclose the Pyruvate carboxyltransferase domain; that stretch reads VGILDSTLRE…IEVVKLDKLQ (256 aa). Arg12 contributes to the 2-oxoglutarate binding site. Glu13 serves as a coordination point for Mg(2+). 3 residues coordinate 2-oxoglutarate: His76, Arg136, and Thr170. The Mg(2+) site is built by His198 and His200. His292 serves as the catalytic Proton acceptor.

The protein belongs to the alpha-IPM synthase/homocitrate synthase family. Homocitrate synthase LYS20/LYS21 subfamily. Mg(2+) serves as cofactor. Requires Mn(2+) as cofactor.

It carries out the reaction acetyl-CoA + 2-oxoglutarate + H2O = (2R)-homocitrate + CoA + H(+). It participates in amino-acid biosynthesis; L-lysine biosynthesis via AAA pathway; L-alpha-aminoadipate from 2-oxoglutarate: step 1/5. Its function is as follows. Catalyzes the aldol-type condensation of 2-oxoglutarate with acetyl-CoA to yield homocitrate. Carries out the first step of the alpha-aminoadipate (AAA) lysine biosynthesis pathway. This chain is Homocitrate synthase, found in Saccharolobus solfataricus (strain ATCC 35092 / DSM 1617 / JCM 11322 / P2) (Sulfolobus solfataricus).